The following is a 150-amino-acid chain: Protein E6 (150 aa).

Zinc fingers lie at residues 31–67 (CVFC…CACC) and 104–140 (CYLC…CLHC).

This sequence belongs to the papillomaviridae E6 protein family. Forms homodimers. Interacts with ubiquitin-protein ligase UBE3A/E6-AP; this interaction stimulates UBE3A ubiquitin activity. Interacts with host TP53 and EP300; this interaction inhibits TP53 activity. Interacts with human zyxin.

The protein localises to the host cytoplasm. It is found in the host nucleus. Plays a major role in the induction and maintenance of cellular transformation. E6 associates with host UBE3A/E6-AP ubiquitin-protein ligase and modulates its activity. Sequesters tumor suppressor TP53 in the host cytoplasm and modulates its activity by interacting with host EP300 that results in the reduction of TP53 acetylation and activation. In turn, apoptosis induced by DNA damage is inhibited. E6 also protects host keratinocytes from apoptosis by mediating the degradation of host BAK1. May also inhibit host immune response. The polypeptide is Protein E6 (Human papillomavirus type 6b).